The chain runs to 173 residues: NADH-ubiquinone oxidoreductase chain 6 (173 aa).

5 consecutive transmembrane segments (helical) span residues 1–21, 27–47, 48–68, 87–107, and 139–159; these read MTYF…GVAS, YGVV…LSLG, VSFV…VVFV, VVGY…IGGL, and CGVG…FVVL.

Belongs to the complex I subunit 6 family.

The protein resides in the mitochondrion membrane. It carries out the reaction a ubiquinone + NADH + 5 H(+)(in) = a ubiquinol + NAD(+) + 4 H(+)(out). Functionally, core subunit of the mitochondrial membrane respiratory chain NADH dehydrogenase (Complex I) that is believed to belong to the minimal assembly required for catalysis. Complex I functions in the transfer of electrons from NADH to the respiratory chain. The immediate electron acceptor for the enzyme is believed to be ubiquinone. The protein is NADH-ubiquinone oxidoreductase chain 6 (MT-ND6) of Synthliboramphus hypoleucus (Guadalupe murrelet).